A 228-amino-acid chain; its full sequence is 6-carboxyhexanoate--CoA ligase (228 aa).

It belongs to the BioW family. As to quaternary structure, homodimer. Requires Mg(2+) as cofactor.

The catalysed reaction is heptanedioate + ATP + CoA = 6-carboxyhexanoyl-CoA + AMP + diphosphate. The protein operates within metabolic intermediate metabolism; pimeloyl-CoA biosynthesis; pimeloyl-CoA from pimelate: step 1/1. Catalyzes the transformation of pimelate into pimeloyl-CoA with concomitant hydrolysis of ATP to AMP. This Staphylococcus epidermidis (strain ATCC 12228 / FDA PCI 1200) protein is 6-carboxyhexanoate--CoA ligase.